A 201-amino-acid polypeptide reads, in one-letter code: UPF0301 protein R00917 (201 aa).

The protein belongs to the UPF0301 (AlgH) family.

This chain is UPF0301 protein R00917, found in Rhizobium meliloti (strain 1021) (Ensifer meliloti).